The primary structure comprises 427 residues: Glutamyl-tRNA reductase (427 aa).

Residues 49 to 52 (TCNR), S101, 106 to 108 (EPQ), and Q112 each bind substrate. The active-site Nucleophile is C50. 181-186 (GAGETI) lines the NADP(+) pocket. Residues 407–427 (FPATPGYRHPPVRPDDADPAP) form a disordered region. Residues 418–427 (VRPDDADPAP) are compositionally biased toward basic and acidic residues.

The protein belongs to the glutamyl-tRNA reductase family. As to quaternary structure, homodimer.

The enzyme catalyses (S)-4-amino-5-oxopentanoate + tRNA(Glu) + NADP(+) = L-glutamyl-tRNA(Glu) + NADPH + H(+). Its pathway is porphyrin-containing compound metabolism; protoporphyrin-IX biosynthesis; 5-aminolevulinate from L-glutamyl-tRNA(Glu): step 1/2. Catalyzes the NADPH-dependent reduction of glutamyl-tRNA(Glu) to glutamate 1-semialdehyde (GSA). This chain is Glutamyl-tRNA reductase, found in Stenotrophomonas maltophilia (strain R551-3).